The following is a 176-amino-acid chain: Inorganic pyrophosphatase (176 aa).

The substrate site is built by Lys-30, Arg-44, and Tyr-56. Mg(2+) is bound by residues Asp-66, Asp-71, and Asp-103. Tyr-142 is a binding site for substrate.

This sequence belongs to the PPase family. In terms of assembly, homohexamer. Mg(2+) serves as cofactor.

It is found in the cytoplasm. It catalyses the reaction diphosphate + H2O = 2 phosphate + H(+). Its function is as follows. Catalyzes the hydrolysis of inorganic pyrophosphate (PPi) forming two phosphate ions. In Aeropyrum pernix (strain ATCC 700893 / DSM 11879 / JCM 9820 / NBRC 100138 / K1), this protein is Inorganic pyrophosphatase.